The following is a 360-amino-acid chain: CLIP domain-containing serine protease B4 (360 aa).

Residues methionine 1–alanine 24 form the signal peptide. The Clip domain maps to aspartate 30–cysteine 83. Cystine bridges form between cysteine 31–cysteine 82, cysteine 41–cysteine 72, cysteine 47–cysteine 83, and cysteine 138–cysteine 154. In terms of domain architecture, Peptidase S1 spans valine 108–tyrosine 360. Catalysis depends on charge relay system residues histidine 153 and aspartate 213. N-linked (GlcNAc...) asparagine glycosylation is present at asparagine 224. Cystine bridges form between cysteine 280-cysteine 297 and cysteine 307-cysteine 336. Serine 311 functions as the Charge relay system in the catalytic mechanism.

It belongs to the peptidase S1 family. CLIP subfamily. In terms of assembly, interacts with SRPN2 in the hemolymph of immune-challenged female mosquitoes; the interaction results in CLIPB4 inhibition. As to expression, in females, expressed in fat body, cuticle, thorax and ovaries.

It is found in the secreted. Functionally, serine protease which plays a role in the innate immune response against protozoan and bacterial pathogens, such as Plasmodium bergei, Staphylococcus aureus, Micrococcus luteus and Escherichia coli, by activating the melanization cascade. Cleaves and activates CLIPB8. In the resistant strain L3-5, involved in the melanization of killed parasite P.berghei ookinetes which results in their clearance. In the susceptible strain G3, appears to be dispensable for ookinete elimination which occurs by lysis. The polypeptide is CLIP domain-containing serine protease B4 (Anopheles gambiae (African malaria mosquito)).